An 835-amino-acid polypeptide reads, in one-letter code: Microcephalin (835 aa).

Positions 1–93 (MAAPILKDVV…AHIDESLFPA (93 aa)) constitute a BRCT 1 domain. A disordered region spans residues 184 to 206 (KEKRENLSPTSSQLIQQSHDNPS). Residues 190-206 (LSPTSSQLIQQSHDNPS) show a composition bias toward polar residues. Phosphoserine is present on residues S279, S287, S296, and S333. The residue at position 335 (T335) is a Phosphothreonine. The span at 346 to 361 (HSRPRSSSVKRKRVSH) shows a compositional bias: basic residues. Disordered stretches follow at residues 346 to 376 (HSRP…RKRS) and 418 to 442 (PDNL…PAQF). S548 is modified (phosphoserine). The disordered stretch occupies residues 557–582 (GLKSTQNRGTTSKISNSSEGEAQSEH). Residues 559 to 577 (KSTQNRGTTSKISNSSEGE) are compositionally biased toward polar residues. BRCT domains are found at residues 640–730 (SGRG…PFEL) and 751–833 (YRGT…NYLL).

As to quaternary structure, interacts with CDC27 and maybe other components of the APC/C complex. Interacts with histone variant H2AX under DNA damage conditions.

It localises to the cytoplasm. The protein localises to the cytoskeleton. The protein resides in the microtubule organizing center. Its subcellular location is the centrosome. Implicated in chromosome condensation and DNA damage induced cellular responses. May play a role in neurogenesis and regulation of the size of the cerebral cortex. This Gorilla gorilla gorilla (Western lowland gorilla) protein is Microcephalin.